We begin with the raw amino-acid sequence, 410 residues long: Cysteine desulfurase IscS (410 aa).

Residues 80-81, Asn-160, Gln-188, and 208-210 contribute to the pyridoxal 5'-phosphate site; these read AT and SGH. Lys-211 carries the post-translational modification N6-(pyridoxal phosphate)lysine. Pyridoxal 5'-phosphate is bound at residue Thr-248. Cys-334 serves as the catalytic Cysteine persulfide intermediate. Residue Cys-334 coordinates [2Fe-2S] cluster.

This sequence belongs to the class-V pyridoxal-phosphate-dependent aminotransferase family. NifS/IscS subfamily. In terms of assembly, homodimer. Forms a heterotetramer with IscU, interacts with other sulfur acceptors. Pyridoxal 5'-phosphate serves as cofactor.

The protein resides in the cytoplasm. The catalysed reaction is (sulfur carrier)-H + L-cysteine = (sulfur carrier)-SH + L-alanine. Its pathway is cofactor biosynthesis; iron-sulfur cluster biosynthesis. Master enzyme that delivers sulfur to a number of partners involved in Fe-S cluster assembly, tRNA modification or cofactor biosynthesis. Catalyzes the removal of elemental sulfur atoms from cysteine to produce alanine. Functions as a sulfur delivery protein for Fe-S cluster synthesis onto IscU, an Fe-S scaffold assembly protein, as well as other S acceptor proteins. This chain is Cysteine desulfurase IscS, found in Rickettsia prowazekii (strain Madrid E).